Here is a 211-residue protein sequence, read N- to C-terminus: Endonuclease YncB (211 aa).

An N-terminal signal peptide occupies residues 1–19; that stretch reads MKKILISMIAIVLSITLAA. C20 carries N-palmitoyl cysteine lipidation. C20 carries the S-diacylglycerol cysteine lipid modification. A disordered region spans residues 24–63; the sequence is HAAKNHSDSNGTEQVSQDTHSNEYNQTEQKAGTPHSKNQK. The segment covering 31–53 has biased composition (polar residues); it reads DSNGTEQVSQDTHSNEYNQTEQK. Residues 64-197 form the TNase-like domain; that stretch reads KLVNVTLDRA…KSDKLSIWSK (134 aa). D77 is a binding site for Ca(2+). R91 is a catalytic residue. Positions 96 and 97 each coordinate Ca(2+). Catalysis depends on residues E99 and R142.

It belongs to the thermonuclease family. It depends on Ca(2+) as a cofactor.

It localises to the cell membrane. Its activity is regulated as follows. Inhibited by aurintricalboxylic acid but not by Zn(2+). Functionally, shows DNase activity on double strand DNA. This Bacillus subtilis (strain 168) protein is Endonuclease YncB (yncB).